The chain runs to 497 residues: MTKHIIVIGGGLGGISAAIRMAQSGYSVSLYEQNTHIGGKVNRHESDGFGFDLGPSILTMPYIFEKLFEYSKKQMSDYVTIKRLPHQWRSFFPDGTTIDLYEGIKETGQHNAILSKQDIEELQNYLNYTRRIDRITEKGYFNYGLDTLSQIIKFHGPLNALINYDYVHTMQQAIDKRISNPYLRQMLGYFIKYVGSSSYDAPAVLSMLFHMQQEQGLWYVEGGIHHLANALEKLAREEGVTIHTGARVDNIKTYQRRVTGVRLDTGEFVKADYIISNMEVIPTYKYLIHLDTQRLNKLEREFEPASSGYVMHLGVACQYPQLAHHNFFFTENAYLNYQQVFHEKVLPDDPTIYLVNTNKTDHTQAPVGYENIKVLPHIPYIQDQPFTTEDYAKFRDKILDKLEKMGLTDLRKHIIYEDVWTPEDIEKNYRSNRGAIYGVVADKKKNKGFKFPKESQYFENLYFVGGSVNPGGGMPMVTLSGQQVADKINAREAKNRK.

Val7–Ile19 serves as a coordination point for FAD.

This sequence belongs to the carotenoid/retinoid oxidoreductase family. CrtP subfamily. FAD serves as cofactor.

The enzyme catalyses all-trans-4,4'-diaponeurosporene + 2 AH2 + 2 O2 = 4,4'-diaponeurosporenal + 2 A + 3 H2O. It functions in the pathway carotenoid biosynthesis; staphyloxanthin biosynthesis; staphyloxanthin from farnesyl diphosphate: step 3/5. Involved in the biosynthesis of the yellow-orange carotenoid staphyloxanthin, which plays a role in the virulence via its protective function against oxidative stress. Catalyzes the oxidation of the terminal methyl side group of 4,4'-diaponeurosporene to form 4,4'-diaponeurosporen-4-al. The C40 carotenoid lycopene is a poor substrate. The chain is 4,4'-diaponeurosporene oxygenase from Staphylococcus aureus (strain Mu50 / ATCC 700699).